The sequence spans 361 residues: Phosphoserine aminotransferase (361 aa).

Arg43 contacts L-glutamate. Pyridoxal 5'-phosphate-binding positions include 77–78 (AS), Trp103, Thr153, Asp173, and Gln196. Lys197 is subject to N6-(pyridoxal phosphate)lysine. Residue 238-239 (NT) coordinates pyridoxal 5'-phosphate.

The protein belongs to the class-V pyridoxal-phosphate-dependent aminotransferase family. SerC subfamily. In terms of assembly, homodimer. Pyridoxal 5'-phosphate is required as a cofactor.

It localises to the cytoplasm. It carries out the reaction O-phospho-L-serine + 2-oxoglutarate = 3-phosphooxypyruvate + L-glutamate. The enzyme catalyses 4-(phosphooxy)-L-threonine + 2-oxoglutarate = (R)-3-hydroxy-2-oxo-4-phosphooxybutanoate + L-glutamate. Its pathway is amino-acid biosynthesis; L-serine biosynthesis; L-serine from 3-phospho-D-glycerate: step 2/3. The protein operates within cofactor biosynthesis; pyridoxine 5'-phosphate biosynthesis; pyridoxine 5'-phosphate from D-erythrose 4-phosphate: step 3/5. Catalyzes the reversible conversion of 3-phosphohydroxypyruvate to phosphoserine and of 3-hydroxy-2-oxo-4-phosphonooxybutanoate to phosphohydroxythreonine. The polypeptide is Phosphoserine aminotransferase (Ectopseudomonas mendocina (strain ymp) (Pseudomonas mendocina)).